The following is a 350-amino-acid chain: 5'-tyrosyl-DNA phosphodiesterase (350 aa).

The tract at residues 113 to 117 (NIDGL) is interaction with 5' end of substrate DNA. The Mg(2+) site is built by Asp115 and Glu145. An interaction with 5' end of substrate DNA region spans residues 219-224 (HLESMR). The active-site Proton donor/acceptor is the Asp258. The tract at residues 260 to 262 (NLR) is interaction with 5' end of substrate DNA.

This sequence belongs to the CCR4/nocturin family. TTRAP/TDP2 subfamily. The cofactor is Mg(2+). Mn(2+) serves as cofactor.

Its subcellular location is the nucleus. The protein resides in the PML body. In terms of biological role, DNA repair enzyme that can remove a variety of covalent adducts from DNA through hydrolysis of a 5'-phosphodiester bond, giving rise to DNA with a free 5' phosphate. Catalyzes the hydrolysis of dead-end complexes between DNA and the topoisomerase 2 (top2) active site tyrosine residue. Hydrolyzes 5'-phosphoglycolates on protruding 5' ends on DNA double-strand breaks (DSBs) due to DNA damage by radiation and free radicals. This chain is 5'-tyrosyl-DNA phosphodiesterase, found in Caenorhabditis briggsae.